The following is a 296-amino-acid chain: tRNA pseudouridine synthase B (296 aa).

Asp-38 (nucleophile) is an active-site residue.

This sequence belongs to the pseudouridine synthase TruB family. Type 1 subfamily.

It catalyses the reaction uridine(55) in tRNA = pseudouridine(55) in tRNA. Its function is as follows. Responsible for synthesis of pseudouridine from uracil-55 in the psi GC loop of transfer RNAs. This Ehrlichia chaffeensis (strain ATCC CRL-10679 / Arkansas) protein is tRNA pseudouridine synthase B.